The sequence spans 410 residues: Tryptophan synthase beta chain (410 aa).

Position 104 is an N6-(pyridoxal phosphate)lysine (Lys-104).

It belongs to the TrpB family. As to quaternary structure, tetramer of two alpha and two beta chains. It depends on pyridoxal 5'-phosphate as a cofactor.

It catalyses the reaction (1S,2R)-1-C-(indol-3-yl)glycerol 3-phosphate + L-serine = D-glyceraldehyde 3-phosphate + L-tryptophan + H2O. It participates in amino-acid biosynthesis; L-tryptophan biosynthesis; L-tryptophan from chorismate: step 5/5. In terms of biological role, the beta subunit is responsible for the synthesis of L-tryptophan from indole and L-serine. In Thermosynechococcus vestitus (strain NIES-2133 / IAM M-273 / BP-1), this protein is Tryptophan synthase beta chain.